The primary structure comprises 364 residues: Histidinol-phosphate aminotransferase (364 aa).

Lysine 225 carries the post-translational modification N6-(pyridoxal phosphate)lysine.

Belongs to the class-II pyridoxal-phosphate-dependent aminotransferase family. Histidinol-phosphate aminotransferase subfamily. As to quaternary structure, homodimer. Pyridoxal 5'-phosphate is required as a cofactor.

The catalysed reaction is L-histidinol phosphate + 2-oxoglutarate = 3-(imidazol-4-yl)-2-oxopropyl phosphate + L-glutamate. Its pathway is amino-acid biosynthesis; L-histidine biosynthesis; L-histidine from 5-phospho-alpha-D-ribose 1-diphosphate: step 7/9. This is Histidinol-phosphate aminotransferase from Sulfurovum sp. (strain NBC37-1).